A 516-amino-acid polypeptide reads, in one-letter code: Multicopper oxidase CueO (516 aa).

A signal peptide (tat-type signal) is located at residues 1–28 (MQRRDFLKYSVALGVASALPLWSRAVFA). Plastocyanin-like domains follow at residues 55 to 165 (GQST…IEDD), 227 to 292 (PRGW…DNKP), and 399 to 516 (GGKF…GFTV). Cu cation is bound by residues His101, His103, His141, and His143. The Cu cation site is built by His443, His446, His448, His499, Cys500, His501, and His505.

This sequence belongs to the multicopper oxidase family. In terms of assembly, monomer. Requires Cu cation as cofactor. In terms of processing, predicted to be exported by the Tat system. The position of the signal peptide cleavage has not been experimentally proven.

Its subcellular location is the periplasm. It carries out the reaction 4 Cu(+) + O2 + 4 H(+) = 4 Cu(2+) + 2 H2O. Its function is as follows. Multicopper oxidase involved in copper homeostasis and copper tolerance under aerobic conditions. Is responsible for the oxidation of Cu(+) to the less harmful Cu(2+) in the periplasm, thereby preventing Cu(+) from entering the cytoplasm. The protein is Multicopper oxidase CueO (cueO) of Escherichia coli O157:H7.